The sequence spans 391 residues: Formate-dependent phosphoribosylglycinamide formyltransferase (391 aa).

N(1)-(5-phospho-beta-D-ribosyl)glycinamide contacts are provided by residues 20–21 and Glu80; that span reads EL. ATP is bound by residues Arg112, Lys153, 158 to 163, 193 to 196, and Glu201; these read SSGKGQ and EGFV. Residues 117 to 306 enclose the ATP-grasp domain; that stretch reads RLAAETLGLP…EFALHVRAIL (190 aa). Residues Glu265 and Glu277 each coordinate Mg(2+). N(1)-(5-phospho-beta-D-ribosyl)glycinamide contacts are provided by residues Asp284, Lys354, and 361-362; that span reads RR.

This sequence belongs to the PurK/PurT family. As to quaternary structure, homodimer.

It catalyses the reaction N(1)-(5-phospho-beta-D-ribosyl)glycinamide + formate + ATP = N(2)-formyl-N(1)-(5-phospho-beta-D-ribosyl)glycinamide + ADP + phosphate + H(+). The protein operates within purine metabolism; IMP biosynthesis via de novo pathway; N(2)-formyl-N(1)-(5-phospho-D-ribosyl)glycinamide from N(1)-(5-phospho-D-ribosyl)glycinamide (formate route): step 1/1. In terms of biological role, involved in the de novo purine biosynthesis. Catalyzes the transfer of formate to 5-phospho-ribosyl-glycinamide (GAR), producing 5-phospho-ribosyl-N-formylglycinamide (FGAR). Formate is provided by PurU via hydrolysis of 10-formyl-tetrahydrofolate. In Shewanella putrefaciens (strain CN-32 / ATCC BAA-453), this protein is Formate-dependent phosphoribosylglycinamide formyltransferase.